Here is a 349-residue protein sequence, read N- to C-terminus: Fe(3+) ions import ATP-binding protein FbpC (349 aa).

Residues 4 to 236 enclose the ABC transporter domain; that stretch reads LDFNKIGKSY…PIDEPTATFL (233 aa). Position 36-43 (36-43) interacts with ATP; the sequence is GPSGSGKT.

Belongs to the ABC transporter superfamily. Fe(3+) ion importer (TC 3.A.1.10) family. As to quaternary structure, the complex is composed of two ATP-binding proteins (FbpC), two transmembrane proteins (FbpB) and a solute-binding protein (FbpA).

It localises to the cell inner membrane. The enzyme catalyses Fe(3+)(out) + ATP + H2O = Fe(3+)(in) + ADP + phosphate + H(+). Its function is as follows. Part of the ABC transporter complex FbpABC involved in Fe(3+) ions import. Responsible for energy coupling to the transport system. This is Fe(3+) ions import ATP-binding protein FbpC from Yersinia enterocolitica.